The primary structure comprises 347 residues: Guanine nucleotide-binding protein alpha-5 subunit (347 aa).

Glycine 2 is lipidated: N-myristoyl glycine. A lipid anchor (S-palmitoyl cysteine) is attached at cysteine 3. The G-alpha domain maps to 27 to 347; it reads NETKLLLLGP…KNIFNTIINY (321 aa). The tract at residues 30-43 is G1 motif; the sequence is KLLLLGPGESGKST. Residues 35–42, 170–176, 195–199, 264–267, and alanine 319 contribute to the GTP site; these read GPGESGKS, LRSRVRT, DVGGQ, and NKVD. Mg(2+)-binding residues include serine 42 and threonine 176. The G2 motif stretch occupies residues 168–176; it reads DVLRSRVRT. A G3 motif region spans residues 191–200; it reads FRMLDVGGQR. Residues 260-267 are G4 motif; sequence IIFFNKVD. Residues 317–322 form a G5 motif region; it reads TCAIDT.

This sequence belongs to the G-alpha family. G(q) subfamily. In terms of assembly, g proteins are composed of 3 units; alpha, beta and gamma. The alpha chain contains the guanine nucleotide binding site.

Its function is as follows. Guanine nucleotide-binding proteins (G proteins) are involved as modulators or transducers in various transmembrane signaling systems. The chain is Guanine nucleotide-binding protein alpha-5 subunit (gpaE) from Dictyostelium discoideum (Social amoeba).